Here is a 217-residue protein sequence, read N- to C-terminus: Imidazole glycerol phosphate synthase subunit HisH (217 aa).

A Glutamine amidotransferase type-1 domain is found at 3 to 217 (TIAIVDYGVG…LYRNFVHWNP (215 aa)). The active-site Nucleophile is the Cys-82. Active-site residues include His-197 and Glu-199.

As to quaternary structure, heterodimer of HisH and HisF.

Its subcellular location is the cytoplasm. It carries out the reaction 5-[(5-phospho-1-deoxy-D-ribulos-1-ylimino)methylamino]-1-(5-phospho-beta-D-ribosyl)imidazole-4-carboxamide + L-glutamine = D-erythro-1-(imidazol-4-yl)glycerol 3-phosphate + 5-amino-1-(5-phospho-beta-D-ribosyl)imidazole-4-carboxamide + L-glutamate + H(+). It catalyses the reaction L-glutamine + H2O = L-glutamate + NH4(+). Its pathway is amino-acid biosynthesis; L-histidine biosynthesis; L-histidine from 5-phospho-alpha-D-ribose 1-diphosphate: step 5/9. Its function is as follows. IGPS catalyzes the conversion of PRFAR and glutamine to IGP, AICAR and glutamate. The HisH subunit catalyzes the hydrolysis of glutamine to glutamate and ammonia as part of the synthesis of IGP and AICAR. The resulting ammonia molecule is channeled to the active site of HisF. The chain is Imidazole glycerol phosphate synthase subunit HisH from Cupriavidus pinatubonensis (strain JMP 134 / LMG 1197) (Cupriavidus necator (strain JMP 134)).